A 280-amino-acid polypeptide reads, in one-letter code: Ribose-phosphate pyrophosphokinase (280 aa).

Residues 32 to 34 (DGE) and 89 to 90 (RQ) contribute to the ATP site. His-122 and Asp-160 together coordinate Mg(2+). Residue Lys-183 is part of the active site. D-ribose 5-phosphate-binding positions include Arg-185, Asp-209, and 213–217 (STGGT).

It belongs to the ribose-phosphate pyrophosphokinase family. Class III (archaeal) subfamily. Requires Mg(2+) as cofactor.

It localises to the cytoplasm. The enzyme catalyses D-ribose 5-phosphate + ATP = 5-phospho-alpha-D-ribose 1-diphosphate + AMP + H(+). It functions in the pathway metabolic intermediate biosynthesis; 5-phospho-alpha-D-ribose 1-diphosphate biosynthesis; 5-phospho-alpha-D-ribose 1-diphosphate from D-ribose 5-phosphate (route I): step 1/1. Its activity is regulated as follows. Activated by Co(2+) and Ni(2+) ions, however Mg(2+) ion shows almost no significant effect on the activity. Equally inhibited by ADP, CTP and GTP, while dTTP and UTP are less inhibitory. Its function is as follows. Involved in the biosynthesis of the central metabolite phospho-alpha-D-ribosyl-1-pyrophosphate (PRPP) via the transfer of pyrophosphoryl group from ATP to 1-hydroxyl of ribose-5-phosphate (Rib-5-P). It can also use CTP and GTP as substrates in addition to ATP. This is Ribose-phosphate pyrophosphokinase from Thermococcus kodakarensis (strain ATCC BAA-918 / JCM 12380 / KOD1) (Pyrococcus kodakaraensis (strain KOD1)).